The chain runs to 340 residues: Ribose-phosphate pyrophosphokinase (340 aa).

ATP contacts are provided by residues 47–49 (NGE) and 106–107 (RQ). Mg(2+) is bound by residues H140 and D182. K206 is a catalytic residue. D-ribose 5-phosphate contacts are provided by residues R208, D234, and 238-242 (DTAGT).

It belongs to the ribose-phosphate pyrophosphokinase family. Class I subfamily. Homohexamer. It depends on Mg(2+) as a cofactor.

The protein resides in the cytoplasm. It carries out the reaction D-ribose 5-phosphate + ATP = 5-phospho-alpha-D-ribose 1-diphosphate + AMP + H(+). It participates in metabolic intermediate biosynthesis; 5-phospho-alpha-D-ribose 1-diphosphate biosynthesis; 5-phospho-alpha-D-ribose 1-diphosphate from D-ribose 5-phosphate (route I): step 1/1. Its function is as follows. Involved in the biosynthesis of the central metabolite phospho-alpha-D-ribosyl-1-pyrophosphate (PRPP) via the transfer of pyrophosphoryl group from ATP to 1-hydroxyl of ribose-5-phosphate (Rib-5-P). This is Ribose-phosphate pyrophosphokinase from Bifidobacterium longum (strain NCC 2705).